We begin with the raw amino-acid sequence, 217 residues long: Kunitz-type trypsin inhibitor-like 2 protein (217 aa).

An N-terminal signal peptide occupies residues 1-26 (MKPLSPLTLSFLLFVFITTLSLAFSN). 2 disulfide bridges follow: Cys70-Cys115 and Cys168-Cys175. Asn191 carries N-linked (GlcNAc...) asparagine glycosylation.

Belongs to the protease inhibitor I3 (leguminous Kunitz-type inhibitor) family.

It is found in the secreted. Functionally, might act as a protease inhibitor involved in plant defense responses. In Pisum sativum (Garden pea), this protein is Kunitz-type trypsin inhibitor-like 2 protein (PIP20-2).